We begin with the raw amino-acid sequence, 198 residues long: Mediator of RNA polymerase II transcription subunit 22 (198 aa).

Residues 159–198 form a disordered region; that stretch reads WGSPEMTSDPSHANHEVSDHLGSQESMQRHRNGSGTSEQS.

The protein belongs to the Mediator complex subunit 22 family. As to quaternary structure, component of the Mediator complex.

It localises to the nucleus. Functionally, component of the Mediator complex, a coactivator involved in the regulated transcription of nearly all RNA polymerase II-dependent genes. Mediator functions as a bridge to convey information from gene-specific regulatory proteins to the basal RNA polymerase II transcription machinery. Mediator is recruited to promoters by direct interactions with regulatory proteins and serves as a scaffold for the assembly of a functional preinitiation complex with RNA polymerase II and the general transcription factors. The polypeptide is Mediator of RNA polymerase II transcription subunit 22 (med22) (Danio rerio (Zebrafish)).